The sequence spans 142 residues: Transcriptional regulator MraZ (142 aa).

SpoVT-AbrB domains lie at 5–47 and 76–119; these read EYNH…PMEE and ANEI…SREK.

The protein belongs to the MraZ family. Forms oligomers.

Its subcellular location is the cytoplasm. The protein resides in the nucleoid. The protein is Transcriptional regulator MraZ of Clostridium tetani (strain Massachusetts / E88).